Here is a 143-residue protein sequence, read N- to C-terminus: Large ribosomal subunit protein uL15 (143 aa).

A disordered region spans residues 1–54; the sequence is MQLNSIKPAPGAKHPKRRVGRGIGSGLGKTAGRGHKGQKSRAGGFHKVGFEGGQ. Positions 21 to 31 are enriched in gly residues; that stretch reads RGIGSGLGKTA.

This sequence belongs to the universal ribosomal protein uL15 family. Part of the 50S ribosomal subunit.

Binds to the 23S rRNA. The sequence is that of Large ribosomal subunit protein uL15 from Nitrosospira multiformis (strain ATCC 25196 / NCIMB 11849 / C 71).